The following is a 264-amino-acid chain: Thymidylate synthase (264 aa).

R21 contacts dUMP. Position 51 (H51) interacts with (6R)-5,10-methylene-5,6,7,8-tetrahydrofolate. Residue 126-127 participates in dUMP binding; sequence RR. The active-site Nucleophile is the C146. DUMP is bound by residues 166-169, N177, and 207-209; these read RSCD and HLY. D169 provides a ligand contact to (6R)-5,10-methylene-5,6,7,8-tetrahydrofolate. S263 provides a ligand contact to (6R)-5,10-methylene-5,6,7,8-tetrahydrofolate.

This sequence belongs to the thymidylate synthase family. Bacterial-type ThyA subfamily. As to quaternary structure, homodimer.

It is found in the cytoplasm. It carries out the reaction dUMP + (6R)-5,10-methylene-5,6,7,8-tetrahydrofolate = 7,8-dihydrofolate + dTMP. It functions in the pathway pyrimidine metabolism; dTTP biosynthesis. Its function is as follows. Catalyzes the reductive methylation of 2'-deoxyuridine-5'-monophosphate (dUMP) to 2'-deoxythymidine-5'-monophosphate (dTMP) while utilizing 5,10-methylenetetrahydrofolate (mTHF) as the methyl donor and reductant in the reaction, yielding dihydrofolate (DHF) as a by-product. This enzymatic reaction provides an intracellular de novo source of dTMP, an essential precursor for DNA biosynthesis. The polypeptide is Thymidylate synthase (Buchnera aphidicola subsp. Acyrthosiphon pisum (strain 5A)).